A 122-amino-acid chain; its full sequence is Large ribosomal subunit protein uL14 (122 aa).

It belongs to the universal ribosomal protein uL14 family. As to quaternary structure, part of the 50S ribosomal subunit. Forms a cluster with proteins L3 and L19. In the 70S ribosome, L14 and L19 interact and together make contacts with the 16S rRNA in bridges B5 and B8.

In terms of biological role, binds to 23S rRNA. Forms part of two intersubunit bridges in the 70S ribosome. The sequence is that of Large ribosomal subunit protein uL14 from Campylobacter hominis (strain ATCC BAA-381 / DSM 21671 / CCUG 45161 / LMG 19568 / NCTC 13146 / CH001A).